A 517-amino-acid polypeptide reads, in one-letter code: MDFRTACEETKTGICLLQDGNQEPFKVRLHLAKDILMIQEQDVICVSGEPFYSGERTVTIRRQTVGGFGLSIKGGAEHNIPVVVSKISKEQRAELSGLLFIGDAILQINGINVRKCRHEEVVQVLRNAGEEVTLTVSFLKRAPAFLKLPLNEDCACAPSDQSSGTSSPLCDSGLHLNYHPNNTDTLSCSSWPTSPGLRWEKRWCDLRLIPLLHSRFSQYVPGTDLSRQNAFQVIAVDGVCTGIIQCLSAEDCVDWLQAIATNISNLTKHNIKKINRNFPVNQQIVYMGWCEAREQDPLQDRVYSPTFLALRGSCLYKFLAPPVTTWDWTRAEKTFSVYEIMCKILKDSDLLDRRKQCFTVQSESGEDLYFSVELESDLAQWERAFQTATFLEVERIQCKTYACVLESHLMGLTIDFSTGFICFDAATKAVLWRYKFSQLKGSSDDGKSKIKFLFQNPDTKQIEAKELEFSNLFAVLHCIHSFFAAKVACLDPLFLGNQATASTAASSATTSKAKYTT.

Residues 57–140 form the PDZ domain; that stretch reads TVTIRRQTVG…EVTLTVSFLK (84 aa). The region spanning 283-390 is the PH domain; sequence QIVYMGWCEA…WERAFQTATF (108 aa).

Belongs to the syntrophin family. Isoform 1, but not isoform 2, interacts with the dystrophin protein DMD and related proteins DTNA and DTNB. Interacts with DGKZ. In terms of tissue distribution, brain specific. In CNS, it is expressed in the perikaryon and proximal portion of the neuronal processes. Strong expression in the hippocampus, neuron-rich dendate granule cells, and pyramidal cell layers. Highly expressed in neurons of the cerebral cortex. Also expressed in the cerebellar cortex, deep cerebellar nuclei, thalamus, and basal ganglia. No expression in muscle cells.

The protein resides in the cytoplasm. Its subcellular location is the cytoskeleton. It is found in the nucleus. Functionally, adapter protein that binds to and probably organizes the subcellular localization of a variety of proteins. May link various receptors to the actin cytoskeleton and the dystrophin glycoprotein complex. May participate in regulating the subcellular location of diacylglycerol kinase-zeta to ensure that diacylglycerol is rapidly inactivated following receptor activation. In Homo sapiens (Human), this protein is Gamma-1-syntrophin (SNTG1).